A 346-amino-acid chain; its full sequence is Methionine import ATP-binding protein MetN 1 (346 aa).

The region spanning 2-241 (IELKNVSKVF…PQHVTTKKFV (240 aa)) is the ABC transporter domain. 38–45 (GYSGAGKS) is a binding site for ATP.

It belongs to the ABC transporter superfamily. Methionine importer (TC 3.A.1.24) family. As to quaternary structure, the complex is composed of two ATP-binding proteins (MetN), two transmembrane proteins (MetI) and a solute-binding protein (MetQ).

It localises to the cell membrane. It catalyses the reaction L-methionine(out) + ATP + H2O = L-methionine(in) + ADP + phosphate + H(+). The enzyme catalyses D-methionine(out) + ATP + H2O = D-methionine(in) + ADP + phosphate + H(+). Its function is as follows. Part of the ABC transporter complex MetNIQ involved in methionine import. Responsible for energy coupling to the transport system. The protein is Methionine import ATP-binding protein MetN 1 of Bacillus anthracis.